Reading from the N-terminus, the 458-residue chain is NALCN channel auxiliary factor 1 (458 aa).

Residues 40–60 form a helical membrane-spanning segment; the sequence is LSLASLLFFTVLLSDHLWFCA. The tract at residues 70-155 is disordered; the sequence is KEHQQQQRQQ…NRGKDDRGKA (86 aa). Positions 75–96 are enriched in low complexity; sequence QQRQQQQQQQQQRQRQQQQQQR. Positions 136-145 are enriched in gly residues; it reads GDGGGGGGKG. 7 cysteine pairs are disulfide-bonded: Cys191/Cys261, Cys226/Cys313, Cys246/Cys261, Cys304/Cys341, Cys324/Cys377, Cys330/Cys376, and Cys334/Cys361. Asn217 is a glycosylation site (N-linked (GlcNAc...) asparagine). Residues 417–437 form a helical membrane-spanning segment; that stretch reads LKLCVLVLILLHTVLTASAAQ.

It belongs to the NALF family. Component of the NALCN channel complex. NALCN complex consists of NALCN and auxiliary subunits, UNC79, UNC80 and NACL1. These auxiliary subunits are essential for the NALCN channel function.

Its subcellular location is the cell membrane. Its function is as follows. Auxillary component of the NALCN sodium channel complex, a channel that regulates the resting membrane potential and controls neuronal excitability. In Homo sapiens (Human), this protein is NALCN channel auxiliary factor 1.